The chain runs to 983 residues: Receptor-type tyrosine-protein phosphatase-like N (983 aa).

The signal sequence occupies residues 1-40 (MRRPRRPGGPAGCGGSEGSGGLRLLVCLLLLSGRPGGCSA). The interval 41–137 (ISAHGCLFDR…HPRDRSGSVP (97 aa)) is RESP18 homology domain. The Lumenal portion of the chain corresponds to 41 to 579 (ISAHGCLFDR…RQAHGISPMR (539 aa)). A disulfide bridge links Cys-59 with Cys-68. A compositionally biased stretch (basic and acidic residues) spans 118 to 133 (RIPRLRPPEPHPRDRS). Disordered regions lie at residues 118-179 (RIPR…SPLS), 293-330 (RARAPRLPEEGGSSRAEDSSEGHEEEVLGGHGEKSPPQ), and 399-420 (GDTADARPPTPLLPGHPTASST). Residues 148–158 (SQGNPTGSSPA) show a composition bias toward polar residues. Over residues 307–326 (RAEDSSEGHEEEVLGGHGEK) the composition is skewed to basic and acidic residues. Ser-311 and Ser-312 each carry phosphoserine. Residues 453–579 (SPLGQSQPTV…RQAHGISPMR (127 aa)) form a sufficient for dimerization of proICA512 region. 2 N-linked (GlcNAc...) asparagine glycosylation sites follow: Asn-510 and Asn-528. The chain crosses the membrane as a helical span at residues 580–604 (SLLLTLVALAGVAGLLVALAVALCM). Residues 605-736 (RHHSKQRDKE…PNTCATAQGE (132 aa)) form a sufficient for dimerization of proICA512 region. At 605–983 (RHHSKQRDKE…VNAILKALPQ (379 aa)) the chain is on the cytoplasmic side. The tract at residues 648–684 (RAEGQPEPSRVSSVSSQFSDAAQASPSSHSSTPSWCE) is disordered. Positions 652 to 681 (QPEPSRVSSVSSQFSDAAQASPSSHSSTPS) are enriched in low complexity. A Tyrosine-protein phosphatase domain is found at 713–973 (LAKEWQALCA…EFALTAVAEE (261 aa)). Lys-758 is covalently cross-linked (Glycyl lysine isopeptide (Lys-Gly) (interchain with G-Cter in SUMO)).

It belongs to the protein-tyrosine phosphatase family. Receptor class 8 subfamily. As to quaternary structure, homodimer; shown for the unprocessed protein (proICA512) in the endoplasmic reticulum and resolved during protein maturation as ICA512-TMF seems to be predominantly monomeric in secretory granules; however, ICA512-CCF interacts with ICA512-TMF disrupting the ICA512-TMF:SNTB2 complex. The isolated lumenal RESP18 homology domain has been shown to form disulfide-linked homooligomers. Interacts (via cytoplasmic domain) with phosphorylated SNTB2; this protects PTPRN against cleavage by CAPN1 to produce ICA512-CCF. Dephosphorylation of SNTB2 upon insulin stimulation disrupts the interaction and results in PTPRN cleavage. Interacts with SNX19. ICA512-CCF interacts with PIAS4; in the nucleus. Interacts with STAT5B (phosphorylated); down-regulated by ICA512-CCF sumoylation; ICA512-CCF prevents STAT5B dephosphorylation; ICA512-CCF mediates interaction of STAT5B with PIAS4. Interacts (via RESP18 homology domain) with insulin and proinsulin. Interacts with PTPRN2, PTPRA and PTPRE. Post-translationally, subject to proteolytic cleavage at multiple sites. Subject to cleavage on a pair of basic residues. Following exocytosis of secretory granules in pancreatic beta-cells ICA512-TMF located in the plasma-membrane is cleaved by mu-type calpain CPN1 to yield ICA512-CCF. In terms of processing, N-glycosylated. O-glycosylated. Post-translationally, sumoylated at two sites including Lys-758. Sumoylation decreases interaction with STAT5. Detected in pancreas islets. Detected in pancreas alpha, beta and delta cells, and in chromaffin cells in the adrenal medulla. Detected in amygdala, hypothalamus, autonomous nerve fibers and ganglia, especially at synaptic contacts. Detected in pituitary (at protein level). Detected in brain, specifically in cerebral cortex, diencephalon and brain stem.

It localises to the membrane. The protein localises to the cytoplasmic vesicle. It is found in the secretory vesicle membrane. Its subcellular location is the perikaryon. The protein resides in the cell projection. It localises to the axon. The protein localises to the synapse. It is found in the cell membrane. Its subcellular location is the endosome. The protein resides in the nucleus. Functionally, plays a role in vesicle-mediated secretory processes. Required for normal accumulation of secretory vesicles in hippocampus, pituitary and pancreatic islets. Required for the accumulation of normal levels of insulin-containing vesicles and preventing their degradation. Plays a role in insulin secretion in response to glucose stimuli. Required for normal accumulation of the neurotransmitters norepinephrine, dopamine and serotonin in the brain. In females, but not in males, required for normal accumulation and secretion of pituitary hormones, such as luteinizing hormone (LH) and follicle-stimulating hormone (FSH). Required to maintain normal levels of renin expression and renin release. Seems to lack intrinsic enzyme activity. Its function is as follows. ICA512-TMF regulates dynamics and exocytosis of insulin secretory granules (SGs); binding of ICA512-TMF to SNTB2/beta-2-syntrophin is proposed to restrain SGs mobility and exocytosis by tethering them to the actin cytoskeleton depending on UTRN; the function is inhibited by cytoplasmic ICA512-CFF dimerizing with ICA512-TMF and displacing SNTB2. In terms of biological role, ICA512-CCF translocated to the nucleus promotes expression of insulin and other granule-related genes; the function implicates binding to and regulating activity of STAT5B probably by preventing its dephosphorylation and potentially by inducing its sumoylation by recruiting PIAS4. Enhances pancreatic beta-cell proliferation by converging with signaling by STAT5B and STAT3. ICA512-CCF located in the cytoplasm regulates dynamics and exocytosis of insulin secretory granules (SGs) by dimerizing with ICA512-TMF and displacing SNTB2 thus enhancing SGs mobility and exocytosis. This is Receptor-type tyrosine-protein phosphatase-like N (Ptprn) from Rattus norvegicus (Rat).